The chain runs to 514 residues: MHTVVVGTSGTTAEDVVAVARHGARVELSAAAVEALAAARLIVDALAAKPEPVYGVSTGFGALASRHIGTELRAQLQRNIVRSHAAGMGPRVEREVVRALMFLRLKTVASGHTGVRPEVAQTMADVLNAGITPVVHEYGSLGCSGDLAPLSHCALTLMGEGEAEGPDGTVRPAGELLAAHGIAPVELREKEGLALLNGTDGMLGMLVMALADLRNLYTSADITAALSLEALLGTDKVLAPELHAIRPHPGQGVSADNMSRVLAGSGLTGHHQDDAPRVQDAYSVRCAPQVNGAGRDTLDHAALVAGRELASSVDNPVVLPDGRVESNGNFHGAPVAYVLDFLAIVAADLGSICERRTDRLLDKNRSHGLPPFLADDAGVDSGLMIAQYTQAALVSEMKRLAVPASADSIPSSAMQEDHVSMGWSAARKLRTAVDNLARIVAVELYAATRAIELRAAEGLTPAPASEAVVAALRAAGAEGPGPDRFLAPDLAAADTFVREGRLVAAVEPVTGPLA.

The 5-imidazolinone (Cys-Gly) cross-link spans 143–145 (CSG). The residue at position 144 (Ser-144) is a 2,3-didehydroalanine (Ser).

This sequence belongs to the PAL/histidase family. Post-translationally, contains an active site 4-methylidene-imidazol-5-one (MIO), which is formed autocatalytically by cyclization and dehydration of residues Cys-Ser-Gly.

The protein resides in the cytoplasm. It catalyses the reaction L-histidine = trans-urocanate + NH4(+). Its pathway is amino-acid degradation; L-histidine degradation into L-glutamate; N-formimidoyl-L-glutamate from L-histidine: step 1/3. The sequence is that of Histidine ammonia-lyase (hutH) from Streptomyces griseus.